Consider the following 293-residue polypeptide: Sodium-type flagellar protein MotY (293 aa).

Positions 1-21 (MNKWLITSGVMLSLLSANSYA) are cleaved as a signal peptide. Residues 175-292 (YSFEDIAFTI…RVVISLGRTQ (118 aa)) form the OmpA-like domain.

The protein resides in the cell membrane. In terms of biological role, may play the role of a stator in the sodium flagellar motor, stabilizing the force-generating unit through direct interaction with the cell wall. This is Sodium-type flagellar protein MotY from Vibrio parahaemolyticus serotype O3:K6 (strain RIMD 2210633).